Here is a 58-residue protein sequence, read N- to C-terminus: Large ribosomal subunit protein bL32 (58 aa).

Residues 1 to 19 show a composition bias toward basic residues; the sequence is MAVPKRKTSKSNTKMRRAA. A disordered region spans residues 1–22; that stretch reads MAVPKRKTSKSNTKMRRAANSK.

Belongs to the bacterial ribosomal protein bL32 family.

This is Large ribosomal subunit protein bL32 from Clostridioides difficile (strain 630) (Peptoclostridium difficile).